Reading from the N-terminus, the 295-residue chain is ATP synthase gamma chain (295 aa).

It belongs to the ATPase gamma chain family. As to quaternary structure, F-type ATPases have 2 components, CF(1) - the catalytic core - and CF(0) - the membrane proton channel. CF(1) has five subunits: alpha(3), beta(3), gamma(1), delta(1), epsilon(1). CF(0) has three main subunits: a, b and c.

Its subcellular location is the cell inner membrane. Functionally, produces ATP from ADP in the presence of a proton gradient across the membrane. The gamma chain is believed to be important in regulating ATPase activity and the flow of protons through the CF(0) complex. This is ATP synthase gamma chain from Sulfurovum sp. (strain NBC37-1).